The sequence spans 156 residues: MTVRIEDKSAERVVGVRVVGPYPQTIPQGCQRLMAWQQQHQVPLGKWLVLYWDDPAEVAPERLRADVVFTVADDFVLPTSGSEGFALQTLPAGQYAIYNVRVSDGDFERVWGDFYQRELPASGYQPVEGVSYEHYLNDCEADGYFDLDIYQTVKKG.

The protein belongs to the DNA gyrase inhibitor family. Interacts with DNA gyrase.

It is found in the cytoplasm. Inhibits the supercoiling activity of DNA gyrase. Acts by inhibiting DNA gyrase at an early step, prior to (or at the step of) binding of DNA by the gyrase. It protects cells against toxins that target DNA gyrase, by inhibiting activity of these toxins and reducing the formation of lethal double-strand breaks in the cell. This Serratia proteamaculans (strain 568) protein is DNA gyrase inhibitor.